The chain runs to 110 residues: UPF0122 protein SGO_1122 (110 aa).

This sequence belongs to the UPF0122 family.

In terms of biological role, might take part in the signal recognition particle (SRP) pathway. This is inferred from the conservation of its genetic proximity to ftsY/ffh. May be a regulatory protein. In Streptococcus gordonii (strain Challis / ATCC 35105 / BCRC 15272 / CH1 / DL1 / V288), this protein is UPF0122 protein SGO_1122.